A 465-amino-acid polypeptide reads, in one-letter code: UDP-N-acetylmuramoylalanine--D-glutamate ligase (465 aa).

127–133 contributes to the ATP binding site; that stretch reads GSNGKST.

This sequence belongs to the MurCDEF family.

The protein resides in the cytoplasm. The catalysed reaction is UDP-N-acetyl-alpha-D-muramoyl-L-alanine + D-glutamate + ATP = UDP-N-acetyl-alpha-D-muramoyl-L-alanyl-D-glutamate + ADP + phosphate + H(+). Its pathway is cell wall biogenesis; peptidoglycan biosynthesis. In terms of biological role, cell wall formation. Catalyzes the addition of glutamate to the nucleotide precursor UDP-N-acetylmuramoyl-L-alanine (UMA). The chain is UDP-N-acetylmuramoylalanine--D-glutamate ligase from Cereibacter sphaeroides (strain KD131 / KCTC 12085) (Rhodobacter sphaeroides).